A 323-amino-acid polypeptide reads, in one-letter code: Peroxidase 16 (323 aa).

A signal peptide spans 1–23 (MKNQSSFSIVALLLIFFSSSVFA). 4 cysteine pairs are disulfide-bonded: C34/C113, C67/C72, C119/C319, and C198/C230. H65 acts as the Proton acceptor in catalysis. The Ca(2+) site is built by D66, V69, G71, D73, and S75. P161 contributes to the substrate binding site. H191 provides a ligand contact to heme b. Ca(2+) is bound at residue T192. D243, S246, and D251 together coordinate Ca(2+).

This sequence belongs to the peroxidase family. Classical plant (class III) peroxidase subfamily. It depends on heme b as a cofactor. Ca(2+) serves as cofactor. Expressed in the whole plant, but preferentially in roots and leaves.

The protein localises to the secreted. It carries out the reaction 2 a phenolic donor + H2O2 = 2 a phenolic radical donor + 2 H2O. Functionally, removal of H(2)O(2), oxidation of toxic reductants, biosynthesis and degradation of lignin, suberization, auxin catabolism, response to environmental stresses such as wounding, pathogen attack and oxidative stress. These functions might be dependent on each isozyme/isoform in each plant tissue. The chain is Peroxidase 16 (PER16) from Arabidopsis thaliana (Mouse-ear cress).